The chain runs to 153 residues: Regulatory protein RecX (153 aa).

The protein belongs to the RecX family.

It localises to the cytoplasm. Modulates RecA activity. This is Regulatory protein RecX from Pseudomonas aeruginosa (strain UCBPP-PA14).